Consider the following 478-residue polypeptide: Cytochrome c-552 (478 aa).

Positions 1 to 27 (MKKQWTRRSAAAIAMVTTLLLSSHSFA) are cleaved as a signal peptide. Histidine 91 lines the heme c pocket. Positions 119, 122, and 123 each coordinate heme. Heme c-binding residues include cysteine 157, cysteine 160, histidine 161, cysteine 206, cysteine 209, and histidine 210. Residues glutamate 212, tyrosine 213, lysine 258, and glutamine 260 each coordinate Ca(2+). A substrate-binding site is contributed by tyrosine 213. Histidine 261 lines the substrate pocket. Heme c contacts are provided by histidine 272, cysteine 279, cysteine 282, histidine 283, histidine 298, cysteine 311, cysteine 314, histidine 315, and histidine 390.

The protein belongs to the cytochrome c-552 family. The cofactor is Ca(2+). Requires heme c as cofactor.

The protein resides in the periplasm. The enzyme catalyses 6 Fe(III)-[cytochrome c] + NH4(+) + 2 H2O = 6 Fe(II)-[cytochrome c] + nitrite + 8 H(+). It participates in nitrogen metabolism; nitrate reduction (assimilation). Catalyzes the reduction of nitrite to ammonia, consuming six electrons in the process. In Aliivibrio fischeri (strain ATCC 700601 / ES114) (Vibrio fischeri), this protein is Cytochrome c-552.